The primary structure comprises 326 residues: Putative ABC transporter ATP-binding protein MPN_334 (326 aa).

Residues 7 to 239 (VEVKHLEKEF…NFGYRLKVNN (233 aa)) form the ABC transporter domain. 42–49 (GQNGAGKT) provides a ligand contact to ATP.

The protein belongs to the ABC transporter superfamily.

This Mycoplasma pneumoniae (strain ATCC 29342 / M129 / Subtype 1) (Mycoplasmoides pneumoniae) protein is Putative ABC transporter ATP-binding protein MPN_334.